The following is a 395-amino-acid chain: Flap endonuclease 1 (395 aa).

The interval 1–104 is N-domain; sequence MGIKHLYQVI…GELAKRFMRK (104 aa). Aspartate 34 is a binding site for Mg(2+). 2 residues coordinate DNA: arginine 47 and arginine 70. The Mg(2+) site is built by aspartate 86, glutamate 158, glutamate 160, aspartate 179, and aspartate 181. The tract at residues 122-253 is I-domain; sequence DVEKFSRRTV…NTALKLIRDH (132 aa). Position 158 (glutamate 158) interacts with DNA. DNA-binding residues include glycine 231 and aspartate 233. Aspartate 233 serves as a coordination point for Mg(2+). The tract at residues 341 to 349 is interaction with PCNA; it reads QQSRLEGFF. Over residues 357 to 389 the composition is skewed to basic and acidic residues; the sequence is QEKATLKRKHEEKLELQKKKKKEEAKAKKEAKS. Residues 357–395 are disordered; the sequence is QEKATLKRKHEEKLELQKKKKKEEAKAKKEAKSKPRGAV.

This sequence belongs to the XPG/RAD2 endonuclease family. FEN1 subfamily. Interacts with PCNA. Three molecules of FEN1 bind to one PCNA trimer with each molecule binding to one PCNA monomer. PCNA stimulates the nuclease activity without altering cleavage specificity. Requires Mg(2+) as cofactor. In terms of processing, phosphorylated. Phosphorylation upon DNA damage induces relocalization to the nuclear plasma.

It is found in the nucleus. Its subcellular location is the nucleolus. The protein resides in the nucleoplasm. The protein localises to the mitochondrion. In terms of biological role, structure-specific nuclease with 5'-flap endonuclease and 5'-3' exonuclease activities involved in DNA replication and repair. During DNA replication, cleaves the 5'-overhanging flap structure that is generated by displacement synthesis when DNA polymerase encounters the 5'-end of a downstream Okazaki fragment. It enters the flap from the 5'-end and then tracks to cleave the flap base, leaving a nick for ligation. Also involved in the long patch base excision repair (LP-BER) pathway, by cleaving within the apurinic/apyrimidinic (AP) site-terminated flap. Acts as a genome stabilization factor that prevents flaps from equilibrating into structures that lead to duplications and deletions. Also possesses 5'-3' exonuclease activity on nicked or gapped double-stranded DNA, and exhibits RNase H activity. Also involved in replication and repair of rDNA and in repairing mitochondrial DNA. In Ajellomyces dermatitidis (strain ER-3 / ATCC MYA-2586) (Blastomyces dermatitidis), this protein is Flap endonuclease 1.